Consider the following 512-residue polypeptide: cAMP-dependent protein kinase catalytic subunit (512 aa).

Over residues 1–15 (MDTTAVASKGSTNVG) the composition is skewed to polar residues. Disordered stretches follow at residues 1–79 (MDTT…SSLW) and 118–166 (IDNL…GLRD). Residues 16–27 (SSTDTLSTSASL) are compositionally biased toward low complexity. 2 stretches are compositionally biased toward polar residues: residues 32-52 (NAGS…SFNG) and 62-79 (SDAS…SSLW). Over residues 143–166 (SRDGRGELGSEHGERRSAMDGLRD) the composition is skewed to basic and acidic residues. The 256-residue stretch at 201–456 (FNFLQTLGTG…SMDIIMHPWF (256 aa)) folds into the Protein kinase domain. Residues 207–215 (LGTGSFGRV) and Lys230 each bind ATP. Asp324 serves as the catalytic Proton acceptor. Position 356 is a phosphothreonine (Thr356). Residues 457–512 (RDISWDKILTRKIEVPYVPPIQAGMGDSSQFDAYADVATDYGTSEDPEFTSIFKDF) enclose the AGC-kinase C-terminal domain.

Belongs to the protein kinase superfamily. AGC Ser/Thr protein kinase family. cAMP subfamily.

It catalyses the reaction L-seryl-[protein] + ATP = O-phospho-L-seryl-[protein] + ADP + H(+). The catalysed reaction is L-threonyl-[protein] + ATP = O-phospho-L-threonyl-[protein] + ADP + H(+). With respect to regulation, activated by cAMP. The chain is cAMP-dependent protein kinase catalytic subunit (pka1) from Schizosaccharomyces pombe (strain 972 / ATCC 24843) (Fission yeast).